The chain runs to 200 residues: Inner membrane-spanning protein YciB (200 aa).

Transmembrane regions (helical) follow at residues 7 to 27, 32 to 52, 56 to 76, 93 to 113, 126 to 146, and 153 to 173; these read HPLFKLATELGPLIVFFFVNA, FAATGAFMVAIIAALIASYVV, IPLMALVTAVVVIVFGTLTLV, LFAAVLGGGLVFNRSFIAIMF, ILTFRWALFFAGMAVLNEIIW, and FWVGFKAFGVLPLTMIFAIAQ.

The protein belongs to the YciB family.

The protein localises to the cell inner membrane. Functionally, plays a role in cell envelope biogenesis, maintenance of cell envelope integrity and membrane homeostasis. The chain is Inner membrane-spanning protein YciB from Bradyrhizobium sp. (strain ORS 278).